Consider the following 590-residue polypeptide: Aspartate--tRNA(Asp/Asn) ligase (590 aa).

Residue Glu-172 coordinates L-aspartate. Residues 196 to 199 (QLFK) are aspartate. Position 218 (Arg-218) interacts with L-aspartate. ATP contacts are provided by residues 218–220 (RDE) and Gln-227. Residue His-449 coordinates L-aspartate. Residue Glu-484 participates in ATP binding. Residue Arg-491 coordinates L-aspartate. 536 to 539 (GIDR) contacts ATP.

Belongs to the class-II aminoacyl-tRNA synthetase family. Type 1 subfamily. Homodimer.

Its subcellular location is the cytoplasm. The enzyme catalyses tRNA(Asx) + L-aspartate + ATP = L-aspartyl-tRNA(Asx) + AMP + diphosphate. Its function is as follows. Aspartyl-tRNA synthetase with relaxed tRNA specificity since it is able to aspartylate not only its cognate tRNA(Asp) but also tRNA(Asn). Reaction proceeds in two steps: L-aspartate is first activated by ATP to form Asp-AMP and then transferred to the acceptor end of tRNA(Asp/Asn). The chain is Aspartate--tRNA(Asp/Asn) ligase from Francisella tularensis subsp. tularensis (strain SCHU S4 / Schu 4).